The sequence spans 909 residues: Aconitate hydratase A (909 aa).

Residues Cys-450, Cys-516, and Cys-519 each coordinate [4Fe-4S] cluster.

It belongs to the aconitase/IPM isomerase family. As to quaternary structure, monomer. [4Fe-4S] cluster serves as cofactor.

The enzyme catalyses citrate = D-threo-isocitrate. It carries out the reaction 3-hydroxybutane-1,2,3-tricarboxylate = 2-methyl-cis-aconitate + H2O. Its pathway is carbohydrate metabolism; tricarboxylic acid cycle; isocitrate from oxaloacetate: step 2/2. Involved in both the tricarboxylic acid (TCA) and methylcitric acid cycles. Catalyzes the reversible isomerization of citrate to isocitrate via cis-aconitate. Also catalyzes the rehydration of 2-methyl-cis-aconitate to produce 2-methylisocitrate. The apo form of AcnA functions as a RNA-binding regulatory protein which plays a role in the regulation of citrate concentration and in the sporulation. To prevent the accumulation of excessive levels of citrate, it binds near the 5' end of the citZ mRNA, decreasing its stability and thereby limiting the concentration of citrate synthase in the cell. Aconitase also binds to the gerE transcript late in sporulation and stabilizes it for translation, thereby increasing the rate and level of GerE protein accumulation. The sequence is that of Aconitate hydratase A (citB) from Bacillus subtilis (strain 168).